The sequence spans 412 residues: BSD domain-containing protein 1 (412 aa).

Residues 146 to 198 enclose the BSD domain; sequence WLAYWDPEHRKAEISELLVTSPSIRALYTKMVPAAVSHSEFWQRYFYKVHQLE. Basic and acidic residues-rich tracts occupy residues 208 to 219 and 255 to 271; these read KQRADQSVHSEE and HVEDKSEKMAELNRDHT. Disordered regions lie at residues 208-228 and 255-383; these read KQRADQSVHSEEPQWEEEEED and HVED…EKDF. A compositionally biased stretch (low complexity) spans 272–287; sequence SITSPSESSESISPIT. Residues 340–351 are compositionally biased toward basic and acidic residues; the sequence is THREDPPSDLRV. The segment covering 355-374 has biased composition (polar residues); that stretch reads NSDSGKSTPSNNGQKGSSTD.

This chain is BSD domain-containing protein 1 (bsdc1), found in Xenopus tropicalis (Western clawed frog).